The primary structure comprises 728 residues: Propionyl-CoA carboxylase alpha chain, mitochondrial (728 aa).

The N-terminal 52 residues, 1–52 (MAGFWVGTAPLVAAGRRGRWPPQQLMLSAALRTLKHVLYYSRQCLMVSRNLG), are a transit peptide targeting the mitochondrion. Residues 62–509 (TFDKILVANR…STKFLSDVYP (448 aa)) form the Biotin carboxylation domain. K65 is subject to N6-acetyllysine; alternate. Position 65 is an N6-succinyllysine; alternate (K65). The residue at position 119 (K119) is an N6-succinyllysine. An N6-acetyllysine; alternate modification is found at K150. K150 carries the N6-succinyllysine; alternate modification. K177 serves as a coordination point for ATP. The region spanning 181–378 (KLLAKKAEVN…LVQEMIRVAK (198 aa)) is the ATP-grasp domain. K200 is modified (N6-acetyllysine; alternate). The residue at position 200 (K200) is an N6-succinyllysine; alternate. ATP contacts are provided by residues 209-270 (AREI…PRHI), E261, and N296. Residue S252 is modified to Phosphoserine. K262 bears the N6-succinyllysine mark. Position 328 is an N6-acetyllysine; alternate (K328). The residue at position 328 (K328) is an N6-succinyllysine; alternate. E336, E349, and N351 together coordinate Mg(2+). Residues E336, E349, and N351 each coordinate Mn(2+). E349 is an active-site residue. Residues K385 and K407 each carry the N6-succinyllysine modification. F409 is a biotin binding site. The residue at position 496 (K496) is an N6-acetyllysine. Residues K502, K513, and K648 each carry the N6-succinyllysine modification. The Biotinyl-binding domain maps to 653 to 728 (KVTEDTSSVL…GEGDLLVELE (76 aa)). Residue K694 is modified to N6-biotinyllysine; by HLCS.

The holoenzyme is a dodecamer composed of 6 PCCA/alpha subunits and 6 PCCB/beta subunits. Interacts (via the biotin carboxylation domain) with SIRT4. Interacts with SIRT3 and SIRT5. The cofactor is Mg(2+). Mn(2+) is required as a cofactor. Biotin serves as cofactor. Acetylated. In terms of processing, the biotin cofactor is covalently attached to the C-terminal biotinyl-binding domain and is required for the catalytic activity. Biotinylation is catalyzed by HLCS.

It is found in the mitochondrion matrix. The catalysed reaction is propanoyl-CoA + hydrogencarbonate + ATP = (S)-methylmalonyl-CoA + ADP + phosphate + H(+). It catalyses the reaction butanoyl-CoA + hydrogencarbonate + ATP = (2S)-ethylmalonyl-CoA + ADP + phosphate + H(+). Its pathway is metabolic intermediate metabolism; propanoyl-CoA degradation; succinyl-CoA from propanoyl-CoA: step 1/3. Functionally, this is one of the 2 subunits of the biotin-dependent propionyl-CoA carboxylase (PCC), a mitochondrial enzyme involved in the catabolism of odd chain fatty acids, branched-chain amino acids isoleucine, threonine, methionine, and valine and other metabolites. Propionyl-CoA carboxylase catalyzes the carboxylation of propionyl-CoA/propanoyl-CoA to D-methylmalonyl-CoA/(S)-methylmalonyl-CoA. Within the holoenzyme, the alpha subunit catalyzes the ATP-dependent carboxylation of the biotin carried by the biotin carboxyl carrier (BCC) domain, while the beta subunit then transfers the carboxyl group from carboxylated biotin to propionyl-CoA. Propionyl-CoA carboxylase also significantly acts on butyryl-CoA/butanoyl-CoA, which is converted to ethylmalonyl-CoA/(2S)-ethylmalonyl-CoA at a much lower rate. Other alternative minor substrates include (2E)-butenoyl-CoA/crotonoyl-CoA. The sequence is that of Propionyl-CoA carboxylase alpha chain, mitochondrial from Homo sapiens (Human).